A 274-amino-acid chain; its full sequence is Enoyl-CoA isomerase/hydratase fer4 (274 aa).

Substrate-binding positions include 77-81 (AGADL) and glycine 124. Residues 79 to 109 (ADLKERREMSEAEVIEFLQDLRHMLEQVEKL) adopt a coiled-coil conformation.

This sequence belongs to the enoyl-CoA hydratase/isomerase family.

It catalyses the reaction a (3S)-3-hydroxyacyl-CoA = a (2E)-enoyl-CoA + H2O. The catalysed reaction is a 4-saturated-(3S)-3-hydroxyacyl-CoA = a (3E)-enoyl-CoA + H2O. It functions in the pathway siderophore biosynthesis. Functionally, enoyl-CoA isomerase/hydratase; part of the gene cluster that mediates the biosynthesis of siderophore ferrichrome A which is contributing to organismal virulence. The first step of ferrichrome A biosynthesis is performed by the HMG-CoA synthase hcs1 which catalyzes the generation of HMG-CoA and CoA using acetoacetyl-CoA and acetyl-CoA as substrates. The enoyl-CoA isomerase/hydratase fer4 then catalyzes the conversion of hcs1-produced HMG-CoA to methylglutaconyl-CoA. The acyltransferase fer5 then fuses the fer4-generated methylglutaconyl-CoA with sid1-generated hydroxyornithine to yield methylglutaconyl hydroxyornithine. Methylglutaconyl hydroxyornithine is then available for use by the NRPS fer3 to generate ferrichrome A. The polypeptide is Enoyl-CoA isomerase/hydratase fer4 (Mycosarcoma maydis (Corn smut fungus)).